Here is a 308-residue protein sequence, read N- to C-terminus: Probable manganese-dependent inorganic pyrophosphatase (308 aa).

6 residues coordinate Mn(2+): His9, Asp13, Asp15, Asp75, His97, and Asp149.

Belongs to the PPase class C family. It depends on Mn(2+) as a cofactor.

It is found in the cytoplasm. It catalyses the reaction diphosphate + H2O = 2 phosphate + H(+). The chain is Probable manganese-dependent inorganic pyrophosphatase from Bacillus pumilus (strain SAFR-032).